A 225-amino-acid polypeptide reads, in one-letter code: MKERKFINEAVKRLLVCEYVVKETENAGFGNMVMKRTPFGTNITLYVNRPGLVIGRRGSKVQQMTDTLEKKYGIETPQIEVKDVKDPDLNPSVIAKKIALSLEKGWSYRKAGNTSLNRTIQAGAKGVLIKISGKISGERARYQKFIYGNVKYSGEPGSKGMITGFSTAKLKVGILGVTVKILNPEYKLPDVFSIENITGGEEVGTESKADQTDVEGRETGNAEES.

A KH type-2 domain is found at 16–85; sequence VCEYVVKETE…TPQIEVKDVK (70 aa). The segment at 202-225 is disordered; the sequence is EVGTESKADQTDVEGRETGNAEES. Over residues 205 to 225 the composition is skewed to basic and acidic residues; sequence TESKADQTDVEGRETGNAEES.

The protein belongs to the universal ribosomal protein uS3 family. In terms of assembly, part of the 30S ribosomal subunit.

Functionally, binds the lower part of the 30S subunit head. In Thermoplasma acidophilum (strain ATCC 25905 / DSM 1728 / JCM 9062 / NBRC 15155 / AMRC-C165), this protein is Small ribosomal subunit protein uS3.